The sequence spans 206 residues: Ras-related protein O-RAL (206 aa).

GTP is bound at residue 21–28 (GSGGVGKS). The Effector region signature appears at 43-51 (YEPTKADSY). GTP contacts are provided by residues 68 to 72 (DTAGQ) and 128 to 131 (NKSD). Positions 180–189 (KMSENKDKNG) are enriched in basic and acidic residues. Residues 180–206 (KMSENKDKNGKKSSRNKKSLRERCCIL) form a disordered region. Residue cysteine 203 is modified to Cysteine methyl ester. The S-geranylgeranyl cysteine moiety is linked to residue cysteine 203. A propeptide spans 204–206 (CIL) (removed in mature form).

The protein belongs to the small GTPase superfamily. Ras family.

The protein resides in the cell membrane. The catalysed reaction is GTP + H2O = GDP + phosphate + H(+). The polypeptide is Ras-related protein O-RAL (Diplobatis ommata (Ocellated electric ray)).